We begin with the raw amino-acid sequence, 181 residues long: Adenylate kinase (181 aa).

10–15 serves as a coordination point for ATP; the sequence is GAGKGT. Residues 30-59 are NMP; that stretch reads STGDLFRANISQGTELGKQAQEYMDAGKLV. AMP contacts are provided by residues T31, R36, 57–59, 85–88, and Q92; these read KLV and GFPR. An LID region spans residues 126–132; sequence SRGRNDD. An ATP-binding site is contributed by R127. AMP-binding residues include R129 and R140. G166 is a binding site for ATP.

It belongs to the adenylate kinase family. As to quaternary structure, monomer.

It localises to the cytoplasm. The enzyme catalyses AMP + ATP = 2 ADP. The protein operates within purine metabolism; AMP biosynthesis via salvage pathway; AMP from ADP: step 1/1. Its function is as follows. Catalyzes the reversible transfer of the terminal phosphate group between ATP and AMP. Plays an important role in cellular energy homeostasis and in adenine nucleotide metabolism. In Corynebacterium urealyticum (strain ATCC 43042 / DSM 7109), this protein is Adenylate kinase.